Here is a 315-residue protein sequence, read N- to C-terminus: Iron(3+)-hydroxamate-binding protein FhuD (315 aa).

A signal peptide spans 1–23 (MTHIYKKLGAAFFALLLIAALAA). Cysteine 24 is lipidated: N-palmitoyl cysteine. The S-diacylglycerol cysteine moiety is linked to residue cysteine 24. In terms of domain architecture, Fe/B12 periplasmic-binding spans 60–315 (RVVVMADGYY…LEFITESLTK (256 aa)).

It belongs to the bacterial solute-binding protein 8 family. The complex is composed of an ATP-binding protein (FhuC), two transmembrane proteins (FhuB and FhuG) and a solute-binding protein (FhuD or YxeB).

It is found in the cell membrane. The protein localises to the membrane raft. Part of the ABC transporter complex FhuCBGD involved in iron(3+)-hydroxamate import. Binds the iron(3+)-hydroxamate complex and transfers it to the membrane-bound permease. Required for the transport of ferrichrome and coprogen. This chain is Iron(3+)-hydroxamate-binding protein FhuD (fhuD), found in Bacillus subtilis (strain 168).